A 569-amino-acid chain; its full sequence is Glucose-6-phosphate isomerase, cytosolic 1A (569 aa).

Catalysis depends on glutamate 360, which acts as the Proton donor. Catalysis depends on residues histidine 391 and lysine 516.

This sequence belongs to the GPI family. Homodimer.

The protein resides in the cytoplasm. The enzyme catalyses alpha-D-glucose 6-phosphate = beta-D-fructose 6-phosphate. The protein operates within carbohydrate degradation; glycolysis; D-glyceraldehyde 3-phosphate and glycerone phosphate from D-glucose: step 2/4. The polypeptide is Glucose-6-phosphate isomerase, cytosolic 1A (PGIC1-A) (Clarkia lewisii (Farewell-to-spring)).